Here is a 382-residue protein sequence, read N- to C-terminus: Small ribosomal subunit protein bS1 homolog (382 aa).

S1 motif domains follow at residues 18-85, 103-168, 189-257, and 274-343; these read GDVV…LSKR, GHVF…LSHK, GDVV…LSIK, and GDIR…LSIK. Ser-244 is subject to Phosphoserine.

It belongs to the bacterial ribosomal protein bS1 family.

In Bacillus cereus (strain ATCC 10987 / NRS 248), this protein is Small ribosomal subunit protein bS1 homolog.